Consider the following 436-residue polypeptide: Magnesium transporter MRS2-4 (436 aa).

Residues 1–56 (MGKGPLSFRRLSSIRHRKKGSAVKDDSAQTSTPSSPPPPLPIHAGGSAVGATGKAK) are disordered. The span at 12–21 (SSIRHRKKGS) shows a compositional bias: basic residues. The segment covering 44–53 (AGGSAVGATG) has biased composition (low complexity). 2 consecutive transmembrane segments (helical) span residues 372–392 (LTLT…SLFG) and 405–425 (VFGY…MVTL). The Required for magnesium transport activity motif lies at 392-394 (GMN).

The protein belongs to the CorA metal ion transporter (MIT) (TC 1.A.35.5) family. In terms of tissue distribution, expressed in the whole plant except roots.

It is found in the membrane. In terms of biological role, magnesium transporter that may mediate the influx of magnesium. In Arabidopsis thaliana (Mouse-ear cress), this protein is Magnesium transporter MRS2-4 (MRS2-4).